The primary structure comprises 132 residues: Small ribosomal subunit protein uS8c (132 aa).

The protein belongs to the universal ribosomal protein uS8 family. As to quaternary structure, part of the 30S ribosomal subunit.

It is found in the plastid. Its subcellular location is the chloroplast. One of the primary rRNA binding proteins, it binds directly to 16S rRNA central domain where it helps coordinate assembly of the platform of the 30S subunit. This chain is Small ribosomal subunit protein uS8c (rps8), found in Rhodomonas salina (Cryptomonas salina).